The following is a 222-amino-acid chain: UPF0758 protein Cpar_0627 (222 aa).

One can recognise an MPN domain in the interval 100–222 (KIQGAQDVFE…WFSFRDHSLL (123 aa)). H171, H173, and D184 together coordinate Zn(2+). A JAMM motif motif is present at residues 171-184 (HNHPSGDVQPSNAD).

The protein belongs to the UPF0758 family.

This is UPF0758 protein Cpar_0627 from Chlorobaculum parvum (strain DSM 263 / NCIMB 8327) (Chlorobium vibrioforme subsp. thiosulfatophilum).